We begin with the raw amino-acid sequence, 216 residues long: Large ribosomal subunit protein uL3 (216 aa).

The disordered stretch occupies residues 136–155 (GVSISHRSHGSTGQRQDPGK). At Q151 the chain carries N5-methylglutamine.

Belongs to the universal ribosomal protein uL3 family. Part of the 50S ribosomal subunit. Forms a cluster with proteins L14 and L19. In terms of processing, methylated by PrmB.

In terms of biological role, one of the primary rRNA binding proteins, it binds directly near the 3'-end of the 23S rRNA, where it nucleates assembly of the 50S subunit. The chain is Large ribosomal subunit protein uL3 from Rickettsia prowazekii (strain Madrid E).